A 971-amino-acid chain; its full sequence is Protein cwh43 (971 aa).

The interval 1 to 242 (MTEKTSSLVF…PSSFATRKKE (242 aa)) is PGAP2-like. 19 consecutive transmembrane segments (helical) span residues 15–35 (VALV…ALAL), 71–91 (VFQW…LLWF), 101–121 (VIIT…WVYV), 129–149 (WHDI…ILVS), 161–181 (IRNI…YWYI), 188–208 (IPGA…WDIL), 286–306 (VYLS…VWYF), 313–333 (ISGY…GIPL), 336–356 (KFAS…IAAY), 366–386 (FVTA…FSNI), 397–417 (ISTF…FFSN), 432–452 (QIPA…FHVQ), 467–487 (ITAL…HTFL), 509–529 (YPHG…APYL), 532–552 (SGAF…FMYI), 555–575 (GWCS…YSFA), 588–608 (VWGG…WVVA), 622–642 (TSYI…AYSG), and 673–693 (LLTG…NMPP). The PGAP2IP-like stretch occupies residues 243-971 (KGEHLSYAEA…LVVHEPWYYD (729 aa)). The active site involves His826.

This sequence in the N-terminal section; belongs to the PGAP2 family. In the C-terminal section; belongs to the PGAP2IP family.

The protein resides in the cell membrane. Its subcellular location is the endoplasmic reticulum membrane. Involved in the maintenance of cell wall integrity. Required for the replacement of the diacylglycerol moiety by ceramides during GPI-anchor maturation. The protein is Protein cwh43 (cwh43) of Schizosaccharomyces pombe (strain 972 / ATCC 24843) (Fission yeast).